The sequence spans 317 residues: Acetyl-coenzyme A carboxylase carboxyl transferase subunit alpha (317 aa).

Residues 32-293 form the CoA carboxyltransferase C-terminal domain; that stretch reads NLSEEIARLE…KRLLTSELQA (262 aa).

Belongs to the AccA family. As to quaternary structure, acetyl-CoA carboxylase is a heterohexamer composed of biotin carboxyl carrier protein (AccB), biotin carboxylase (AccC) and two subunits each of ACCase subunit alpha (AccA) and ACCase subunit beta (AccD).

It is found in the cytoplasm. The enzyme catalyses N(6)-carboxybiotinyl-L-lysyl-[protein] + acetyl-CoA = N(6)-biotinyl-L-lysyl-[protein] + malonyl-CoA. It participates in lipid metabolism; malonyl-CoA biosynthesis; malonyl-CoA from acetyl-CoA: step 1/1. Its function is as follows. Component of the acetyl coenzyme A carboxylase (ACC) complex. First, biotin carboxylase catalyzes the carboxylation of biotin on its carrier protein (BCCP) and then the CO(2) group is transferred by the carboxyltransferase to acetyl-CoA to form malonyl-CoA. The sequence is that of Acetyl-coenzyme A carboxylase carboxyl transferase subunit alpha from Legionella pneumophila (strain Paris).